The primary structure comprises 51 residues: Large ribosomal subunit protein bL33 (51 aa).

The protein belongs to the bacterial ribosomal protein bL33 family.

This is Large ribosomal subunit protein bL33 from Marinobacter nauticus (strain ATCC 700491 / DSM 11845 / VT8) (Marinobacter aquaeolei).